We begin with the raw amino-acid sequence, 356 residues long: uncharacterized protein (356 aa).

The N-terminal stretch at 1 to 21 (MHWSRFVGIFLVFSVFSLVNC) is a signal peptide. The tract at residues 293–317 (RPETDYEGANLPNIPSKKGSANQPV) is disordered.

This is an uncharacterized protein from Acanthamoeba polyphaga mimivirus (APMV).